Reading from the N-terminus, the 334-residue chain is Ketol-acid reductoisomerase (NADP(+)) (334 aa).

The 181-residue stretch at 1 to 181 (MTTVYYDQSV…GATRAGVLET (181 aa)) folds into the KARI N-terminal Rossmann domain. NADP(+)-binding positions include 25-28 (YGSQ), R48, S52, and 82-85 (DEIQ). H107 is a catalytic residue. G133 lines the NADP(+) pocket. Positions 182-327 (SFKEETETDL…RELRDMMPFI (146 aa)) constitute a KARI C-terminal knotted domain. Mg(2+)-binding residues include D190, E194, E226, and E230. S251 serves as a coordination point for substrate.

It belongs to the ketol-acid reductoisomerase family. The cofactor is Mg(2+).

The catalysed reaction is (2R)-2,3-dihydroxy-3-methylbutanoate + NADP(+) = (2S)-2-acetolactate + NADPH + H(+). The enzyme catalyses (2R,3R)-2,3-dihydroxy-3-methylpentanoate + NADP(+) = (S)-2-ethyl-2-hydroxy-3-oxobutanoate + NADPH + H(+). It participates in amino-acid biosynthesis; L-isoleucine biosynthesis; L-isoleucine from 2-oxobutanoate: step 2/4. Its pathway is amino-acid biosynthesis; L-valine biosynthesis; L-valine from pyruvate: step 2/4. Functionally, involved in the biosynthesis of branched-chain amino acids (BCAA). Catalyzes an alkyl-migration followed by a ketol-acid reduction of (S)-2-acetolactate (S2AL) to yield (R)-2,3-dihydroxy-isovalerate. In the isomerase reaction, S2AL is rearranged via a Mg-dependent methyl migration to produce 3-hydroxy-3-methyl-2-ketobutyrate (HMKB). In the reductase reaction, this 2-ketoacid undergoes a metal-dependent reduction by NADPH to yield (R)-2,3-dihydroxy-isovalerate. This Staphylococcus saprophyticus subsp. saprophyticus (strain ATCC 15305 / DSM 20229 / NCIMB 8711 / NCTC 7292 / S-41) protein is Ketol-acid reductoisomerase (NADP(+)).